The following is a 224-amino-acid chain: Deoxyribose-phosphate aldolase (224 aa).

The active-site Proton donor/acceptor is Asp-91. Lys-152 serves as the catalytic Schiff-base intermediate with acetaldehyde. Residue Lys-181 is the Proton donor/acceptor of the active site.

It belongs to the DeoC/FbaB aldolase family. DeoC type 1 subfamily.

The protein resides in the cytoplasm. It carries out the reaction 2-deoxy-D-ribose 5-phosphate = D-glyceraldehyde 3-phosphate + acetaldehyde. The protein operates within carbohydrate degradation; 2-deoxy-D-ribose 1-phosphate degradation; D-glyceraldehyde 3-phosphate and acetaldehyde from 2-deoxy-alpha-D-ribose 1-phosphate: step 2/2. Catalyzes a reversible aldol reaction between acetaldehyde and D-glyceraldehyde 3-phosphate to generate 2-deoxy-D-ribose 5-phosphate. In Mycoplasma pneumoniae (strain ATCC 29342 / M129 / Subtype 1) (Mycoplasmoides pneumoniae), this protein is Deoxyribose-phosphate aldolase.